The primary structure comprises 494 residues: Metalloprotease TIKI1 (494 aa).

The N-terminal stretch at 1–25 is a signal peptide; it reads MTMMTMMMVSWSAFLQICWILMVRA. Topologically, residues 26-467 are extracellular; sequence NQFNPGEPSG…QEHERANHDR (442 aa). Asn234 and Asn282 each carry an N-linked (GlcNAc...) asparagine glycan. A helical membrane pass occupies residues 468–488; it reads TFSGSSSRTGPALSALAVCVQ. Over 489–494 the chain is Cytoplasmic; the sequence is MLRLLL.

Belongs to the TIKI family. Requires Mn(2+) as cofactor. Co(2+) is required as a cofactor.

The protein resides in the cell membrane. Functionally, metalloprotease that acts as a negative regulator of the Wnt signaling pathway by mediating the cleavage of the N-terminal residues of a subset of Wnt proteins. Following cleavage, Wnt proteins become oxidized and form large disulfide-bond oligomers, leading to their inactivation. This Danio rerio (Zebrafish) protein is Metalloprotease TIKI1 (trabd2a).